A 159-amino-acid polypeptide reads, in one-letter code: 2-C-methyl-D-erythritol 2,4-cyclodiphosphate synthase (159 aa).

The a divalent metal cation site is built by Asp-8 and His-10. Residues 8-10 (DVH) and 34-35 (HS) contribute to the 4-CDP-2-C-methyl-D-erythritol 2-phosphate site. A divalent metal cation is bound at residue His-42. Residues 56–58 (DIG), 61–65 (FPDTD), 100–106 (AQAPKML), 132–135 (TTTE), Phe-139, and Arg-142 each bind 4-CDP-2-C-methyl-D-erythritol 2-phosphate.

This sequence belongs to the IspF family. As to quaternary structure, homotrimer. Requires a divalent metal cation as cofactor.

The enzyme catalyses 4-CDP-2-C-methyl-D-erythritol 2-phosphate = 2-C-methyl-D-erythritol 2,4-cyclic diphosphate + CMP. Its pathway is isoprenoid biosynthesis; isopentenyl diphosphate biosynthesis via DXP pathway; isopentenyl diphosphate from 1-deoxy-D-xylulose 5-phosphate: step 4/6. Involved in the biosynthesis of isopentenyl diphosphate (IPP) and dimethylallyl diphosphate (DMAPP), two major building blocks of isoprenoid compounds. Catalyzes the conversion of 4-diphosphocytidyl-2-C-methyl-D-erythritol 2-phosphate (CDP-ME2P) to 2-C-methyl-D-erythritol 2,4-cyclodiphosphate (ME-CPP) with a corresponding release of cytidine 5-monophosphate (CMP). The polypeptide is 2-C-methyl-D-erythritol 2,4-cyclodiphosphate synthase (Salmonella typhi).